A 241-amino-acid chain; its full sequence is Uridylate kinase (241 aa).

Residues K15 to G18, G58, and R62 contribute to the ATP site. Residues D77 and T138–T145 contribute to the UMP site. Residues T165, Y171, and D174 each contribute to the ATP site.

This sequence belongs to the UMP kinase family. In terms of assembly, homohexamer.

It is found in the cytoplasm. The enzyme catalyses UMP + ATP = UDP + ADP. It participates in pyrimidine metabolism; CTP biosynthesis via de novo pathway; UDP from UMP (UMPK route): step 1/1. Inhibited by UTP. Functionally, catalyzes the reversible phosphorylation of UMP to UDP. This chain is Uridylate kinase, found in Desulfotalea psychrophila (strain LSv54 / DSM 12343).